The primary structure comprises 122 residues: uncharacterized protein (122 aa).

The segment covering 1 to 10 (MGTGLRSQSL) has biased composition (polar residues). A disordered region spans residues 1–68 (MGTGLRSQSL…GQEWLPGSLG (68 aa)). Basic and acidic residues predominate over residues 40–56 (QGREKSRSSDGGPERLD).

This is an uncharacterized protein from Bos taurus (Bovine).